The following is a 295-amino-acid chain: CCAAT-binding factor complex subunit php4 (295 aa).

Residues M1 to A19 are compositionally biased toward low complexity. The segment at M1–E69 is disordered. Residues R73–S111 are a coiled coil. The Nuclear export signal motif lies at L93 to L100. The tract at residues T108–E130 is disordered.

In terms of assembly, component of tha CCAAT-binding complex composed of at least php2, php3, php4 and php5. Interacts with crm1 and grx4.

The protein localises to the cytoplasm. It localises to the nucleus. The protein resides in the cytoskeleton. Its subcellular location is the spindle pole. In terms of biological role, component of the transcription regulatory CCAAT-binding complex. Required for the reprogramming of the cell for iron use. Down-regulates pcl1, sdh4, and isa1 underlow-iron conditions. In Schizosaccharomyces pombe (strain 972 / ATCC 24843) (Fission yeast), this protein is CCAAT-binding factor complex subunit php4 (php4).